Here is a 130-residue protein sequence, read N- to C-terminus: Endoglucanase 2 (130 aa).

Catalysis depends on residues H47, D98, and E107.

It belongs to the glycosyl hydrolase 9 (cellulase E) family.

It carries out the reaction Endohydrolysis of (1-&gt;4)-beta-D-glucosidic linkages in cellulose, lichenin and cereal beta-D-glucans.. Its function is as follows. Involved in ripening fruit process. This chain is Endoglucanase 2 (CEL2), found in Persea americana (Avocado).